Consider the following 88-residue polypeptide: MANTHSAKKATRKITRRTAVNKSRRTLMRGSVRIVEEAIAKGDRDAAIQAMKRAEPELMRAGQQNIVHKNSASRKVSRLTHRIAKLAK.

Positions 1–16 (MANTHSAKKATRKITR) are enriched in basic residues. The interval 1 to 20 (MANTHSAKKATRKITRRTAV) is disordered.

This sequence belongs to the bacterial ribosomal protein bS20 family.

Its function is as follows. Binds directly to 16S ribosomal RNA. The polypeptide is Small ribosomal subunit protein bS20 (Nitrobacter hamburgensis (strain DSM 10229 / NCIMB 13809 / X14)).